Here is a 323-residue protein sequence, read N- to C-terminus: Aldo-keto reductase family 1 member C4 (323 aa).

NADP(+) is bound by residues 20–24 (GFGTY) and aspartate 50. Tyrosine 55 serves as the catalytic Proton donor. Residue histidine 117 participates in substrate binding. Residues 166–167 (SN), glutamine 190, 216–221 (HSALGT), and 270–280 (KSYNEQRIREN) contribute to the NADP(+) site.

Belongs to the aldo/keto reductase family. As to quaternary structure, monomer.

It localises to the cytoplasm. It is found in the cytosol. It catalyses the reaction chlordecone alcohol + NADP(+) = chlordecone + NADPH + H(+). The enzyme catalyses a 3alpha-hydroxysteroid + NADP(+) = a 3-oxosteroid + NADPH + H(+). It carries out the reaction a 3alpha-hydroxysteroid + NAD(+) = a 3-oxosteroid + NADH + H(+). The catalysed reaction is 5alpha-androstane-3alpha,17beta-diol + NADP(+) = 17beta-hydroxy-5alpha-androstan-3-one + NADPH + H(+). It catalyses the reaction 5alpha-androstane-3beta,17beta-diol + NADP(+) = 17beta-hydroxy-5alpha-androstan-3-one + NADPH + H(+). The enzyme catalyses 5alpha-androstane-3alpha,17beta-diol + NAD(+) = 17beta-hydroxy-5alpha-androstan-3-one + NADH + H(+). It carries out the reaction 17beta-estradiol + NADP(+) = estrone + NADPH + H(+). The catalysed reaction is 17beta-estradiol + NAD(+) = estrone + NADH + H(+). It catalyses the reaction (20S)-hydroxypregn-4-en-3-one + NADP(+) = progesterone + NADPH + H(+). The enzyme catalyses (20S)-hydroxypregn-4-en-3-one + NAD(+) = progesterone + NADH + H(+). It carries out the reaction androsterone + NADP(+) = 5alpha-androstan-3,17-dione + NADPH + H(+). The catalysed reaction is testosterone + NADP(+) = androst-4-ene-3,17-dione + NADPH + H(+). It catalyses the reaction testosterone + NAD(+) = androst-4-ene-3,17-dione + NADH + H(+). The enzyme catalyses 3alpha-hydroxy-5alpha-androstane 17-O-(beta-D-glucuronate) + NADP(+) = 5alpha-dihydrotestosterone 17-O-(beta-D-glucuronate) + NADPH + H(+). It carries out the reaction (3beta,5alpha,17beta)-3-hydroxy-androstan-17-yl sulfate + NADP(+) = 5alpha-dihydrotestosterone sulfate + NADPH + H(+). The catalysed reaction is 5alpha-androstane-3alpha,17beta-diol + NAD(+) = androsterone + NADH + H(+). It participates in steroid metabolism. In terms of biological role, cytosolic aldo-keto reductase that catalyzes the NADH and NADPH-dependent reduction of ketosteroids to hydroxysteroids. Liver specific enzyme that acts as an NAD(P)(H)-dependent 3-, 17- and 20-ketosteroid reductase on the steroid nucleus and side chain. Displays the ability to catalyze both oxidation and reduction in vitro, but most probably acts as a reductase in vivo since the oxidase activity measured in vitro is inhibited by physiological concentration of NADPH. Acts preferentially as a 3-alpha-hydroxysteroid dehydrogenase (HSD) with a subsidiary 3-beta-HSD activity. Catalyzes efficiently the transformation of the potent androgen 5-alpha-dihydrotestosterone (5alpha-DHT or 17beta-hydroxy-5alpha-androstan-3-one) into the less active form, 5-alpha-androstan-3-alpha,17-beta-diol (3-alpha-diol). Catalyzes the reduction of estrone into 17beta-estradiol but with low efficiency. Metabolizes a broad spectrum of natural and synthetic therapeutic steroid and plays an important role in metabolism of androgens, estrogens, progestereone and conjugated steroids. Catalyzes the biotransformation of the pesticide chlordecone (kepone) to its corresponding alcohol leading to increased biliary excretion of the pesticide and concomitant reduction of its neurotoxicity since bile is the major excretory route. This chain is Aldo-keto reductase family 1 member C4 (AKR1C4), found in Macaca fascicularis (Crab-eating macaque).